The sequence spans 345 residues: S-adenosylmethionine:tRNA ribosyltransferase-isomerase (345 aa).

Belongs to the QueA family. Monomer.

It localises to the cytoplasm. The catalysed reaction is 7-aminomethyl-7-carbaguanosine(34) in tRNA + S-adenosyl-L-methionine = epoxyqueuosine(34) in tRNA + adenine + L-methionine + 2 H(+). The protein operates within tRNA modification; tRNA-queuosine biosynthesis. Its function is as follows. Transfers and isomerizes the ribose moiety from AdoMet to the 7-aminomethyl group of 7-deazaguanine (preQ1-tRNA) to give epoxyqueuosine (oQ-tRNA). This Helicobacter pylori (strain G27) protein is S-adenosylmethionine:tRNA ribosyltransferase-isomerase.